The chain runs to 419 residues: Zinc finger protein Pegasus (419 aa).

C2H2-type zinc fingers lie at residues 79–101 (LKCR…IRIH), 107–129 (HRCH…MRSH), and 135–158 (YKCE…RRRH). 2 disordered regions span residues 203-255 (LQKP…DQDM) and 310-360 (SVNT…TPVQ). The span at 208-228 (SEQHHLGDFTHDLPPHAHLHQ) shows a compositional bias: basic and acidic residues. 2 stretches are compositionally biased toward polar residues: residues 310 to 320 (SVNTAQASSPI) and 341 to 360 (ERTS…TPVQ). 2 consecutive C2H2-type zinc fingers follow at residues 366–388 (HHCP…MGCH) and 394–418 (FQCN…RGQH).

Belongs to the Ikaros C2H2-type zinc-finger protein family. In terms of assembly, probably self-associates.

It is found in the nucleus. Functionally, transcriptional repressor that binds the core 5'GNNTGTNG-3' DNA consensus sequence. The sequence is that of Zinc finger protein Pegasus (ikzf5) from Danio rerio (Zebrafish).